A 369-amino-acid chain; its full sequence is S-(hydroxymethyl)glutathione dehydrogenase (369 aa).

Zn(2+) contacts are provided by Cys-40, His-62, Cys-92, Cys-95, Cys-98, Cys-106, and Cys-169.

Belongs to the zinc-containing alcohol dehydrogenase family. Class-III subfamily. As to quaternary structure, homodimer. Requires Zn(2+) as cofactor.

It localises to the cytoplasm. It catalyses the reaction S-(hydroxymethyl)glutathione + NADP(+) = S-formylglutathione + NADPH + H(+). The catalysed reaction is S-(hydroxymethyl)glutathione + NAD(+) = S-formylglutathione + NADH + H(+). The enzyme catalyses a primary alcohol + NAD(+) = an aldehyde + NADH + H(+). It carries out the reaction a secondary alcohol + NAD(+) = a ketone + NADH + H(+). It catalyses the reaction S-nitrosoglutathione + NADH + H(+) = S-(hydroxysulfenamide)glutathione + NAD(+). In terms of biological role, has high formaldehyde dehydrogenase activity in the presence of glutathione and catalyzes the oxidation of normal alcohols in a reaction that is not GSH-dependent. In addition, hemithiolacetals other than those formed from GSH, including omega-thiol fatty acids, also are substrates. Also acts as a S-nitroso-glutathione reductase by catalyzing the NADH-dependent reduction of S-nitrosoglutathione. The chain is S-(hydroxymethyl)glutathione dehydrogenase (frmA) from Escherichia coli (strain SMS-3-5 / SECEC).